A 264-amino-acid chain; its full sequence is Stage 0 sporulation protein A (264 aa).

Residues 5-123 (KVCLVDDNKE…NLTSHIRQVS (119 aa)) enclose the Response regulatory domain. Ca(2+)-binding residues include aspartate 10, aspartate 11, and aspartate 56. Aspartate 56 carries the post-translational modification 4-aspartylphosphate. The H-T-H motif DNA-binding region spans 196 to 215 (PDIAKKYNTTASRVERAIRH).

The cofactor is Ca(2+). Post-translationally, phosphorylated by KinA and KinB.

Its subcellular location is the cytoplasm. In terms of biological role, may play the central regulatory role in sporulation. It may be an element of the effector pathway responsible for the activation of sporulation genes in response to nutritional stress. Spo0A may act in concert with Spo0H (a sigma factor) to control the expression of some genes that are critical to the sporulation process. Repressor of abrB, activator of the spoIIa operon. Binds the DNA sequence 5'-TGNCGAA-3' (0A box). This chain is Stage 0 sporulation protein A (spo0A), found in Bacillus anthracis.